A 396-amino-acid chain; its full sequence is F-box protein At2g21930 (396 aa).

The region spanning 19–65 is the F-box domain; it reads SGNSVQIPFDLIPEILKRLPVKTLARFLSVSKEYTSIIRNRDFMKSY.

This Arabidopsis thaliana (Mouse-ear cress) protein is F-box protein At2g21930.